Reading from the N-terminus, the 482-residue chain is Protein trichome birefringence-like 15 (482 aa).

A helical; Signal-anchor for type II membrane protein transmembrane segment spans residues 109–129 (GSVSLSLIILILLVTTLLVSA). Residues 217-219 (GDS) carry the GDS motif motif. The DCXHWCLPGXXDXWN motif motif lies at 461–475 (DCLHWCLPGIPDTWN).

Belongs to the PC-esterase family. TBL subfamily.

It localises to the membrane. In terms of biological role, may act as a bridging protein that binds pectin and other cell wall polysaccharides. Probably involved in maintaining esterification of pectins. May be involved in the specific O-acetylation of cell wall polymers. The sequence is that of Protein trichome birefringence-like 15 (TBL15) from Arabidopsis thaliana (Mouse-ear cress).